The following is a 324-amino-acid chain: o-succinylbenzoate synthase (324 aa).

Residue lysine 135 is the Proton donor of the active site. Residues aspartate 163, glutamate 192, and aspartate 215 each contribute to the Mg(2+) site. The active-site Proton acceptor is the lysine 237.

The protein belongs to the mandelate racemase/muconate lactonizing enzyme family. MenC type 1 subfamily. Requires a divalent metal cation as cofactor.

The enzyme catalyses (1R,6R)-6-hydroxy-2-succinyl-cyclohexa-2,4-diene-1-carboxylate = 2-succinylbenzoate + H2O. Its pathway is quinol/quinone metabolism; 1,4-dihydroxy-2-naphthoate biosynthesis; 1,4-dihydroxy-2-naphthoate from chorismate: step 4/7. It functions in the pathway quinol/quinone metabolism; menaquinone biosynthesis. Its function is as follows. Converts 2-succinyl-6-hydroxy-2,4-cyclohexadiene-1-carboxylate (SHCHC) to 2-succinylbenzoate (OSB). This chain is o-succinylbenzoate synthase, found in Aliivibrio salmonicida (strain LFI1238) (Vibrio salmonicida (strain LFI1238)).